Here is a 177-residue protein sequence, read N- to C-terminus: MTGAPSARRSELSTQNRLTHIDETGAARMVDVSQKDVTTRLARASGRVLVSPRVIELLRGEGVPKGDALATARIAGIMGAKRTPDLIPLCHPLAVSGVEVELGVADDAVEITATVKTTDRTGVEMEALTAVSVAALTVIDMVKAVDKSAVITDVRVEAKSGGKSGDYRRTAPEGPDA.

Substrate contacts are provided by residues 89-91 (LCH) and 125-126 (ME). Asp-140 is an active-site residue.

This sequence belongs to the MoaC family. Homohexamer; trimer of dimers.

It catalyses the reaction (8S)-3',8-cyclo-7,8-dihydroguanosine 5'-triphosphate = cyclic pyranopterin phosphate + diphosphate. Its pathway is cofactor biosynthesis; molybdopterin biosynthesis. In terms of biological role, catalyzes the conversion of (8S)-3',8-cyclo-7,8-dihydroguanosine 5'-triphosphate to cyclic pyranopterin monophosphate (cPMP). This Streptomyces griseus subsp. griseus (strain JCM 4626 / CBS 651.72 / NBRC 13350 / KCC S-0626 / ISP 5235) protein is Cyclic pyranopterin monophosphate synthase.